Reading from the N-terminus, the 116-residue chain is Phage-like element PBSX protein XkdD (116 aa).

The sequence is that of Phage-like element PBSX protein XkdD (xkdD) from Bacillus subtilis (strain 168).